We begin with the raw amino-acid sequence, 310 residues long: Aspartate carbamoyltransferase catalytic subunit (310 aa).

The carbamoyl phosphate site is built by Arg55 and Thr56. Lys83 contacts L-aspartate. Carbamoyl phosphate-binding residues include Arg105, His133, and Gln136. L-aspartate is bound by residues Arg166 and Arg220. 2 residues coordinate carbamoyl phosphate: Gly261 and Pro262.

This sequence belongs to the aspartate/ornithine carbamoyltransferase superfamily. ATCase family. Heterododecamer (2C3:3R2) of six catalytic PyrB chains organized as two trimers (C3), and six regulatory PyrI chains organized as three dimers (R2).

It carries out the reaction carbamoyl phosphate + L-aspartate = N-carbamoyl-L-aspartate + phosphate + H(+). It functions in the pathway pyrimidine metabolism; UMP biosynthesis via de novo pathway; (S)-dihydroorotate from bicarbonate: step 2/3. Functionally, catalyzes the condensation of carbamoyl phosphate and aspartate to form carbamoyl aspartate and inorganic phosphate, the committed step in the de novo pyrimidine nucleotide biosynthesis pathway. The sequence is that of Aspartate carbamoyltransferase catalytic subunit from Chlorobium phaeovibrioides (strain DSM 265 / 1930) (Prosthecochloris vibrioformis (strain DSM 265)).